The sequence spans 221 residues: Thiamine-phosphate synthase (221 aa).

Residues 46 to 50 and N83 contribute to the 4-amino-2-methyl-5-(diphosphooxymethyl)pyrimidine site; that span reads QFREK. D84 and D103 together coordinate Mg(2+). S122 provides a ligand contact to 4-amino-2-methyl-5-(diphosphooxymethyl)pyrimidine. 149-151 provides a ligand contact to 2-[(2R,5Z)-2-carboxy-4-methylthiazol-5(2H)-ylidene]ethyl phosphate; it reads TQS. K152 lines the 4-amino-2-methyl-5-(diphosphooxymethyl)pyrimidine pocket. Residues G181 and 201 to 202 each bind 2-[(2R,5Z)-2-carboxy-4-methylthiazol-5(2H)-ylidene]ethyl phosphate; that span reads IS.

This sequence belongs to the thiamine-phosphate synthase family. It depends on Mg(2+) as a cofactor.

It catalyses the reaction 2-[(2R,5Z)-2-carboxy-4-methylthiazol-5(2H)-ylidene]ethyl phosphate + 4-amino-2-methyl-5-(diphosphooxymethyl)pyrimidine + 2 H(+) = thiamine phosphate + CO2 + diphosphate. The catalysed reaction is 2-(2-carboxy-4-methylthiazol-5-yl)ethyl phosphate + 4-amino-2-methyl-5-(diphosphooxymethyl)pyrimidine + 2 H(+) = thiamine phosphate + CO2 + diphosphate. It carries out the reaction 4-methyl-5-(2-phosphooxyethyl)-thiazole + 4-amino-2-methyl-5-(diphosphooxymethyl)pyrimidine + H(+) = thiamine phosphate + diphosphate. It participates in cofactor biosynthesis; thiamine diphosphate biosynthesis; thiamine phosphate from 4-amino-2-methyl-5-diphosphomethylpyrimidine and 4-methyl-5-(2-phosphoethyl)-thiazole: step 1/1. Condenses 4-methyl-5-(beta-hydroxyethyl)thiazole monophosphate (THZ-P) and 2-methyl-4-amino-5-hydroxymethyl pyrimidine pyrophosphate (HMP-PP) to form thiamine monophosphate (TMP). The protein is Thiamine-phosphate synthase of Actinobacillus succinogenes (strain ATCC 55618 / DSM 22257 / CCUG 43843 / 130Z).